The following is a 337-amino-acid chain: GTP 3',8-cyclase (337 aa).

Residues 17–243 (PFQRQYYYLR…HKSHTDGPAK (227 aa)) form the Radical SAM core domain. A GTP-binding site is contributed by arginine 26. 2 residues coordinate [4Fe-4S] cluster: cysteine 33 and cysteine 37. Tyrosine 39 provides a ligand contact to S-adenosyl-L-methionine. [4Fe-4S] cluster is bound at residue cysteine 40. Arginine 76 is a binding site for GTP. Glycine 80 contacts S-adenosyl-L-methionine. Threonine 107 lines the GTP pocket. S-adenosyl-L-methionine is bound at residue serine 131. Residue lysine 168 coordinates GTP. Methionine 202 provides a ligand contact to S-adenosyl-L-methionine. Residues cysteine 265 and cysteine 268 each coordinate [4Fe-4S] cluster. Residue 270 to 272 (RLR) participates in GTP binding. Cysteine 282 provides a ligand contact to [4Fe-4S] cluster.

The protein belongs to the radical SAM superfamily. MoaA family. In terms of assembly, monomer and homodimer. Requires [4Fe-4S] cluster as cofactor.

It carries out the reaction GTP + AH2 + S-adenosyl-L-methionine = (8S)-3',8-cyclo-7,8-dihydroguanosine 5'-triphosphate + 5'-deoxyadenosine + L-methionine + A + H(+). The protein operates within cofactor biosynthesis; molybdopterin biosynthesis. In terms of biological role, catalyzes the cyclization of GTP to (8S)-3',8-cyclo-7,8-dihydroguanosine 5'-triphosphate. The polypeptide is GTP 3',8-cyclase (Haemophilus influenzae (strain PittEE)).